We begin with the raw amino-acid sequence, 178 residues long: Probable inosine/xanthosine triphosphatase (178 aa).

It belongs to the YjjX NTPase family. Homodimer. It depends on Mg(2+) as a cofactor. Requires Mn(2+) as cofactor.

It carries out the reaction XTP + H2O = XDP + phosphate + H(+). The catalysed reaction is ITP + H2O = IDP + phosphate + H(+). In terms of biological role, phosphatase that hydrolyzes non-canonical purine nucleotides such as XTP and ITP to their respective diphosphate derivatives. Probably excludes non-canonical purines from DNA/RNA precursor pool, thus preventing their incorporation into DNA/RNA and avoiding chromosomal lesions. The protein is Probable inosine/xanthosine triphosphatase of Pyrobaculum aerophilum (strain ATCC 51768 / DSM 7523 / JCM 9630 / CIP 104966 / NBRC 100827 / IM2).